The sequence spans 216 residues: UPF0301 protein Nham_3550 (216 aa).

A compositionally biased stretch (basic residues) spans 1–10 (MSAARKRPGT). Positions 1–25 (MSAARKRPGTGRRQTDDADTGAPDQ) are disordered.

Belongs to the UPF0301 (AlgH) family.

This is UPF0301 protein Nham_3550 from Nitrobacter hamburgensis (strain DSM 10229 / NCIMB 13809 / X14).